Here is a 760-residue protein sequence, read N- to C-terminus: ATP-dependent zinc metalloprotease FtsH (760 aa).

Topologically, residues 1–5 (MNRKN) are cytoplasmic. A helical membrane pass occupies residues 6-26 (VTRTITAIAVVVLLGWSFFYF). The Extracellular segment spans residues 27-110 (SDDTRGYKPV…KVSTVVNQGS (84 aa)). A helical membrane pass occupies residues 111–131 (ILGELLVYVLPLLLLVGLFVM). Residues 132–760 (FSRMQGGARM…EVSRTKPAHG (629 aa)) are Cytoplasmic-facing. 203–210 (GPPGTGKT) contacts ATP. Residue H425 participates in Zn(2+) binding. E426 is a catalytic residue. Zn(2+) contacts are provided by H429 and D501. The segment at 616-760 (DFGGRIPSDK…EVSRTKPAHG (145 aa)) is disordered. The span at 650 to 669 (AFKAAIAQATQAAEAARSDA) shows a compositional bias: low complexity. Over residues 740 to 750 (GSDESSAEQDD) the composition is skewed to acidic residues.

This sequence in the central section; belongs to the AAA ATPase family. In the C-terminal section; belongs to the peptidase M41 family. As to quaternary structure, homohexamer. It depends on Zn(2+) as a cofactor.

It localises to the cell membrane. Acts as a processive, ATP-dependent zinc metallopeptidase for both cytoplasmic and membrane proteins. Plays a role in the quality control of integral membrane proteins. This chain is ATP-dependent zinc metalloprotease FtsH, found in Mycobacterium tuberculosis (strain CDC 1551 / Oshkosh).